The primary structure comprises 111 residues: Putative lipid-binding protein AIR1 (111 aa).

The signal sequence occupies residues 1 to 23 (MAPRTPLALFVSLNLLFFTYTSA). 3 disulfides stabilise this stretch: C28-C58, C38-C57, and C74-C110.

This sequence belongs to the plant LTP family. PEARLI1 subfamily.

The protein localises to the secreted. The protein is Putative lipid-binding protein AIR1 (AIR1) of Arabidopsis thaliana (Mouse-ear cress).